Here is a 441-residue protein sequence, read N- to C-terminus: Serine carboxypeptidase-like 2 (441 aa).

Positions 1–29 are cleaved as a signal peptide; the sequence is MANKYFSSVLKSLLLLLHLVFLSKQHVDS. 3 disulfide bridges follow: cysteine 88/cysteine 331, cysteine 252/cysteine 266, and cysteine 290/cysteine 297. An N-linked (GlcNAc...) asparagine glycan is attached at asparagine 109. Serine 184 is an active-site residue. N-linked (GlcNAc...) asparagine glycosylation occurs at asparagine 350. Aspartate 366 is an active-site residue. N-linked (GlcNAc...) asparagine glycosylation is present at asparagine 382. The active site involves histidine 419.

The protein belongs to the peptidase S10 family. In terms of tissue distribution, expressed in seedlings and roots.

It is found in the secreted. Its function is as follows. Probable carboxypeptidase. This Arabidopsis thaliana (Mouse-ear cress) protein is Serine carboxypeptidase-like 2 (SCPL2).